Consider the following 296-residue polypeptide: Acetylglutamate kinase (296 aa).

Residues 67-68 (GG), arginine 89, and asparagine 194 each bind substrate.

This sequence belongs to the acetylglutamate kinase family. ArgB subfamily.

The protein localises to the cytoplasm. The catalysed reaction is N-acetyl-L-glutamate + ATP = N-acetyl-L-glutamyl 5-phosphate + ADP. The protein operates within amino-acid biosynthesis; L-arginine biosynthesis; N(2)-acetyl-L-ornithine from L-glutamate: step 2/4. Catalyzes the ATP-dependent phosphorylation of N-acetyl-L-glutamate. This Brucella anthropi (strain ATCC 49188 / DSM 6882 / CCUG 24695 / JCM 21032 / LMG 3331 / NBRC 15819 / NCTC 12168 / Alc 37) (Ochrobactrum anthropi) protein is Acetylglutamate kinase.